The following is a 2278-amino-acid chain: Protein Ycf2 (2278 aa).

ATP is bound at residue 1632 to 1639; it reads GSIGTGRS.

Belongs to the Ycf2 family.

It is found in the plastid. It localises to the chloroplast stroma. Its function is as follows. Probable ATPase of unknown function. Its presence in a non-photosynthetic plant (Epifagus virginiana) and experiments in tobacco indicate that it has an essential function which is probably not related to photosynthesis. The chain is Protein Ycf2 from Solanum bulbocastanum (Wild potato).